Reading from the N-terminus, the 327-residue chain is Transaldolase (327 aa).

The active-site Schiff-base intermediate with substrate is Lys-132.

The protein belongs to the transaldolase family. Type 1 subfamily. In terms of assembly, homodimer.

It is found in the cytoplasm. The enzyme catalyses D-sedoheptulose 7-phosphate + D-glyceraldehyde 3-phosphate = D-erythrose 4-phosphate + beta-D-fructose 6-phosphate. The protein operates within carbohydrate degradation; pentose phosphate pathway; D-glyceraldehyde 3-phosphate and beta-D-fructose 6-phosphate from D-ribose 5-phosphate and D-xylulose 5-phosphate (non-oxidative stage): step 2/3. Functionally, transaldolase is important for the balance of metabolites in the pentose-phosphate pathway. In Chlamydia felis (strain Fe/C-56) (Chlamydophila felis), this protein is Transaldolase.